A 74-amino-acid chain; its full sequence is MFEKVRKIIAEQLGIEEDEITMESSFIDDLGADSLDIVELIMALEEEFDLEIPDSEAEKITTVGDVVEYIKNNS.

Positions 1-74 (MFEKVRKIIA…DVVEYIKNNS (74 aa)) constitute a Carrier domain. The residue at position 34 (serine 34) is an O-(pantetheine 4'-phosphoryl)serine.

It belongs to the acyl carrier protein (ACP) family. Post-translationally, 4'-phosphopantetheine is transferred from CoA to a specific serine of apo-ACP by AcpS. This modification is essential for activity because fatty acids are bound in thioester linkage to the sulfhydryl of the prosthetic group.

Its subcellular location is the cytoplasm. It functions in the pathway lipid metabolism; fatty acid biosynthesis. In terms of biological role, carrier of the growing fatty acid chain in fatty acid biosynthesis. This Acetivibrio thermocellus (strain ATCC 27405 / DSM 1237 / JCM 9322 / NBRC 103400 / NCIMB 10682 / NRRL B-4536 / VPI 7372) (Clostridium thermocellum) protein is Acyl carrier protein.